The sequence spans 130 residues: kinetoplast-associated protein 2-1 (130 aa).

Positions 1–10 are excised as a propeptide; the sequence is MLRRTVSNFA. A disordered region spans residues 89–130; it reads LTKKWNETKQAQREKAQKAQKKTKSAKSKVKKAAKKSKKSKK. The segment covering 92–105 has biased composition (basic and acidic residues); it reads KWNETKQAQREKAQ. Basic residues predominate over residues 106-130; that stretch reads KAQKKTKSAKSKVKKAAKKSKKSKK.

The protein belongs to the KAP family. In terms of assembly, associates with the kinetoplast DNA network.

The protein localises to the mitochondrion matrix. The protein resides in the kinetoplast. Histone H1-like DNA-binding protein involved in the organization and segregation of kinetoplast DNA (kDNA). The mitochondrial DNA of kinetoplastid protozoa consists of about 5,000 minicircles and 20 to 30 maxicircles. These circular DNAs are held together by catenation into a highly organized compact disk structure referred to as a kinetoplast DNA (kDNA) network. Binds preferentially to a specific fragment of minicircle DNA and is able to compact kDNA networks through DNA charge neutralization and condensation. The protein is kinetoplast-associated protein 2-1 (KAP2-1) of Crithidia fasciculata.